The following is a 156-amino-acid chain: Small ribosomal subunit protein uS7 (156 aa).

The protein belongs to the universal ribosomal protein uS7 family. Part of the 30S ribosomal subunit. Contacts proteins S9 and S11.

Functionally, one of the primary rRNA binding proteins, it binds directly to 16S rRNA where it nucleates assembly of the head domain of the 30S subunit. Is located at the subunit interface close to the decoding center, probably blocks exit of the E-site tRNA. The protein is Small ribosomal subunit protein uS7 of Aeromonas salmonicida (strain A449).